Reading from the N-terminus, the 113-residue chain is MMRDIGLRVQPPAEKCDDPKCPWHGNLKIHGRVFEGIVVSDKPRKTVTVERQYYFYLNKYERYELRRSKIHAHNPPCINAKVGDKVLIAETRPLSKTKHFVVVAVLERAEERR.

This sequence belongs to the universal ribosomal protein uS17 family. Part of the 30S ribosomal subunit.

In terms of biological role, one of the primary rRNA binding proteins, it binds specifically to the 5'-end of 16S ribosomal RNA. The chain is Small ribosomal subunit protein uS17 from Pyrococcus furiosus (strain ATCC 43587 / DSM 3638 / JCM 8422 / Vc1).